We begin with the raw amino-acid sequence, 2225 residues long: Multifunctional protein CAD (2225 aa).

A2 bears the N-acetylalanine mark. The interval 2–365 (AALVLEDGSV…TVKEATAGNP (364 aa)) is GATase (Glutamine amidotransferase). L-glutamine contacts are provided by S44, G222, and G224. The 187-residue stretch at 177–363 (RILALDCGLK…LETVKEATAG (187 aa)) folds into the Glutamine amidotransferase type-1 domain. The active-site Nucleophile; for GATase activity is C252. Residues L253, Q256, N294, G296, and F297 each coordinate L-glutamine. Catalysis depends on for GATase activity residues H336 and E338. The tract at residues 366–394 (GGQTVRERLTERLCPPGIPTPGSGLPPPR) is linker. Positions 395–933 (KVLILGSGGL…TTHDLTFRTP (539 aa)) are CPSase A. Positions 395-1455 (KVLILGSGGL…APPLKVHVDC (1061 aa)) are CPSase (Carbamoyl phosphate synthase). T456 carries the phosphothreonine; by MAPK1 modification. ATP-binding residues include R515, R555, G561, G562, K592, E599, G625, I626, H627, Q668, and E682. An ATP-grasp 1 domain is found at 519–711 (AARMAEIGEH…LAYVAAKLAL (193 aa)). Mg(2+)-binding residues include Q668, E682, and N684. 3 residues coordinate Mn(2+): Q668, E682, and N684. K747 bears the N6-acetyllysine mark. The CPSase B stretch occupies residues 934–1455 (HVLVLGSGVY…APPLKVHVDC (522 aa)). Position 1038 is a phosphoserine (S1038). Residues 1052–1243 (SRLLDTIGIS…LVALATRVIM (192 aa)) enclose the ATP-grasp 2 domain. ATP is bound by residues R1088, K1127, I1129, E1134, G1159, V1160, H1161, S1162, Q1202, and E1214. Mg(2+) contacts are provided by Q1202, E1214, and N1216. Mn(2+) contacts are provided by Q1202, E1214, and N1216. Residues 1308–1462 (FKIPKKNILL…VDCMTSQKLV (155 aa)) form the MGS-like domain. The residue at position 1406 (S1406) is a Phosphoserine; by PKA. The residue at position 1411 (K1411) is an N6-acetyllysine. A DHOase (dihydroorotase) region spans residues 1456 to 1788 (MTSQKLVRLP…VKGTVRRVVL (333 aa)). H1471 and H1473 together coordinate Zn(2+). Positions 1475 and 1505 each coordinate (S)-dihydroorotate. K1556, H1590, C1613, H1614, and E1637 together coordinate Zn(2+). K1556 carries the post-translational modification N6-carboxylysine. Residue R1661 participates in (S)-dihydroorotate binding. Position 1686 (D1686) interacts with Zn(2+). The For DHOase activity role is filled by D1686. H1690 and P1702 together coordinate (S)-dihydroorotate. The linker stretch occupies residues 1789-1917 (RGEVAYIDGQ…GLLHPQTSPL (129 aa)). A disordered region spans residues 1811–1899 (KWPQGAVPQL…YPPPPVPRQA (89 aa)). Residues 1825–1834 (PATSEMTTTP) show a composition bias toward polar residues. Residue S1859 is modified to Phosphoserine; by RPS6KB1 and PKA. Positions 1866-1878 (EEPKEKSSRKVAE) are enriched in basic and acidic residues. Residue S1873 is modified to Phosphoserine; by PKC; in vitro. At T1884 the chain carries Phosphothreonine. S1900 and S1938 each carry phosphoserine. The ATCase (Aspartate transcarbamylase) stretch occupies residues 1918–2225 (LHSLVGQHIL…ALLATVLGRF (308 aa)). Residues R1975 and T1976 each coordinate carbamoyl phosphate. K2003 is an L-aspartate binding site. Carbamoyl phosphate contacts are provided by R2024, H2052, and Q2055. L-aspartate-binding residues include R2085 and R2146. Carbamoyl phosphate-binding residues include M2185 and P2186.

The protein in the N-terminal section; belongs to the CarA family. It in the 2nd section; belongs to the CarB family. This sequence in the 3rd section; belongs to the metallo-dependent hydrolases superfamily. DHOase family. CAD subfamily. In the C-terminal section; belongs to the aspartate/ornithine carbamoyltransferase superfamily. ATCase family. Homohexamer. Interacts with CIPC. It depends on Zn(2+) as a cofactor. Mg(2+) is required as a cofactor. Requires Mn(2+) as cofactor. Post-translationally, activated by MAP kinase (Erk1/2) phosphorylation just prior to the S phase of the cell cycle, when the demand for pyrimidine nucleotides is greatest, and down-regulated as the cells emerge from S phase by protein kinase A (PKA) phosphorylation. Phosphorylation at Ser-1859 by RPS6KB1 downstream of MTOR promotes oligomerization and stimulates dihydroorotase activity. Phosphorylation at Ser-1406 reduces sensitivity to feedback inhibition by UTP.

It is found in the cytoplasm. The protein resides in the nucleus. It catalyses the reaction hydrogencarbonate + L-glutamine + 2 ATP + H2O = carbamoyl phosphate + L-glutamate + 2 ADP + phosphate + 2 H(+). The catalysed reaction is L-glutamine + H2O = L-glutamate + NH4(+). The enzyme catalyses hydrogencarbonate + NH4(+) + 2 ATP = carbamoyl phosphate + 2 ADP + phosphate + 2 H(+). It carries out the reaction carbamoyl phosphate + L-aspartate = N-carbamoyl-L-aspartate + phosphate + H(+). It catalyses the reaction (S)-dihydroorotate + H2O = N-carbamoyl-L-aspartate + H(+). Its pathway is pyrimidine metabolism; UMP biosynthesis via de novo pathway; (S)-dihydroorotate from bicarbonate: step 1/3. The protein operates within pyrimidine metabolism; UMP biosynthesis via de novo pathway; (S)-dihydroorotate from bicarbonate: step 2/3. It participates in pyrimidine metabolism; UMP biosynthesis via de novo pathway; (S)-dihydroorotate from bicarbonate: step 3/3. Allosterically regulated and controlled by phosphorylation. 5-phosphoribose 1-diphosphate (PRPP) is an activator while UMP and UTP are inhibitors of the CPSase reaction. Multifunctional protein that encodes the first 3 enzymatic activities of the de novo pyrimidine pathway: carbamoylphosphate synthetase (CPSase; EC 6.3.5.5), aspartate transcarbamylase (ATCase; EC 2.1.3.2) and dihydroorotase (DHOase; EC 3.5.2.3). The CPSase-function is accomplished in 2 steps, by a glutamine-dependent amidotransferase activity (GATase) that binds and cleaves glutamine to produce ammonia, followed by an ammonium-dependent carbamoyl phosphate synthetase, which reacts with the ammonia, hydrogencarbonate and ATP to form carbamoyl phosphate. The endogenously produced carbamoyl phosphate is sequestered and channeled to the ATCase active site. ATCase then catalyzes the formation of carbamoyl-L-aspartate from L-aspartate and carbamoyl phosphate. In the last step, DHOase catalyzes the cyclization of carbamoyl aspartate to dihydroorotate. In Homo sapiens (Human), this protein is Multifunctional protein CAD.